A 152-amino-acid polypeptide reads, in one-letter code: ASP external chaperone (152 aa).

Positions 1-22 are cleaved as a signal peptide; that stretch reads MNKPVTLLLATLLAPLSGQLCA.

Forms a complex with the serine protease ASP in the periplasm. After translocation of the ASP-ORF2 complex from the periplasm to the extracellular space, the complex is dissociated in a pH-dependent manner.

It localises to the periplasm. Its subcellular location is the secreted. Its activity is regulated as follows. Degraded by ASP after secretion and dissociation of the ASP-ORF2 complex. Functionally, required for the production of the active form of the Aeromonas extracellular serine protease (ASP). Acts as a chaperone that helps ASP form an active structure in the periplasm. Formation of a complex with ASP in the periplasm also inactivates the protease activity and likely protects ASP from intrinsic proteases. Dissociation of the ASP-ORF2 complex after secretion in the extracellular space generates an active ASP. The polypeptide is ASP external chaperone (Aeromonas sobria).